A 187-amino-acid chain; its full sequence is Rusticyanin (187 aa).

Positions 1 to 32 are cleaved as a signal peptide; the sequence is MYTQNTMKKNWYVTVGAAAALAATVGMGTAMA. The Plastocyanin-like domain maps to 85–187; that stretch reads SFEVHDKKNP…TGMFGKIVVK (103 aa). Cu cation-binding residues include His-117, Cys-170, His-175, and Met-180.

As to quaternary structure, monomer. Cu cation is required as a cofactor.

Its subcellular location is the periplasm. In terms of biological role, electron carrier from cytochrome c552 to the A-type oxidase. The polypeptide is Rusticyanin (rus) (Acidithiobacillus ferrooxidans (strain ATCC 23270 / DSM 14882 / CIP 104768 / NCIMB 8455) (Ferrobacillus ferrooxidans (strain ATCC 23270))).